The primary structure comprises 90 residues: Probable Fe(2+)-trafficking protein (90 aa).

The protein belongs to the Fe(2+)-trafficking protein family.

Functionally, could be a mediator in iron transactions between iron acquisition and iron-requiring processes, such as synthesis and/or repair of Fe-S clusters in biosynthetic enzymes. The chain is Probable Fe(2+)-trafficking protein from Chromobacterium violaceum (strain ATCC 12472 / DSM 30191 / JCM 1249 / CCUG 213 / NBRC 12614 / NCIMB 9131 / NCTC 9757 / MK).